The following is a 155-amino-acid chain: MEGVLLFWKYRALFFLVLCSLVLCKVHLSQASPTSQQHNDAASLSKIYPRGSHWAVGHLMGKKSIEEYPYAYDEADRSSAAVFSEGDKPSDGYQQWKESLLNLLKMIEVNEYRNSKAMREASVYNKKFSGAEDNNLKEMLDYLYQMMNMKENTSS.

Positions M1–A31 are cleaved as a signal peptide. M60 is subject to Methionine amide. Residues F128–S155 constitute a propeptide that is removed on maturation.

The protein belongs to the bombesin/neuromedin-B/ranatensin family. As to expression, brain and stomach. In the stomach GRP was localized, at the base of the gastric pits, to occasional cells whose distribution and appearance were consistent with that of gut neuroendocrine cells.

Its subcellular location is the secreted. It localises to the cytoplasmic vesicle. The protein localises to the secretory vesicle lumen. Its function is as follows. Stimulates the release of gastrin and other gastrointestinal hormones. The chain is Gastrin-releasing peptide (grp) from Bombina orientalis (Oriental fire-bellied toad).